The sequence spans 875 residues: Neurotrypsin (875 aa).

Positions 1-20 (MTLARFVLALVLGALPEVVX) are cleaved as a signal peptide. Asn-26 carries an N-linked (GlcNAc...) asparagine glycan. A disordered region spans residues 31 to 88 (HRPRHSPPTGPHYPYYLPTQQRPPRTRPPPPLPRFPRPPRALPAQRPHALQAGHTPRP). Residues 56 to 71 (TRPPPPLPRFPRPPRA) show a composition bias toward pro residues. Positions 93-165 (CPAGEPWVSV…GKVDWGYCDC (73 aa)) constitute a Kringle domain. Intrachain disulfides connect Cys-93–Cys-165, Cys-109–Cys-149, Cys-138–Cys-163, Cys-195–Cys-259, Cys-208–Cys-269, Cys-239–Cys-249, Cys-305–Cys-369, Cys-318–Cys-379, Cys-349–Cys-359, Cys-412–Cys-475, Cys-425–Cys-485, Cys-455–Cys-465, Cys-525–Cys-589, Cys-538–Cys-599, Cys-569–Cys-579, Cys-619–Cys-750, Cys-661–Cys-677, Cys-765–Cys-831, Cys-794–Cys-808, and Cys-821–Cys-850. SRCR domains are found at residues 170 to 271 (IRLR…TCSF), 280 to 381 (IRLV…SCTP), 387 to 487 (IRLA…ACYP), and 500 to 601 (VRLM…ICDY). The tract at residues 619-630 (CGLRLLHRRQKR) is zymogen activation region. Residues 631 to 874 (IIGGKNSLRG…FVPWIKSVTK (244 aa)) enclose the Peptidase S1 domain. The active-site Charge relay system is His-676. Asn-683 carries N-linked (GlcNAc...) asparagine glycosylation. Asp-726 functions as the Charge relay system in the catalytic mechanism. The active-site Charge relay system is the Ser-825.

The protein belongs to the peptidase S1 family.

It localises to the secreted. Its function is as follows. Plays a role in neuronal plasticity and the proteolytic action may subserve structural reorganizations associated with learning and memory operations. In Nomascus leucogenys (Northern white-cheeked gibbon), this protein is Neurotrypsin (PRSS12).